Consider the following 86-residue polypeptide: Large ribosomal subunit protein bL31B (86 aa).

This sequence belongs to the bacterial ribosomal protein bL31 family. Type B subfamily. Part of the 50S ribosomal subunit.

The protein is Large ribosomal subunit protein bL31B of Vibrio vulnificus (strain CMCP6).